A 416-amino-acid polypeptide reads, in one-letter code: Phosphoglycerate kinase (416 aa).

Valine 23, aspartate 24, phenylalanine 25, asparagine 26, arginine 39, serine 62, histidine 63, glycine 65, arginine 66, leucine 121, arginine 122, histidine 169, and arginine 170 together coordinate (2R)-3-phosphoglycerate. Glycine 213 is an ADP binding site. Glycine 213 is a CDP binding site. Residues alanine 214 and lysine 215 each contribute to the AMP site. Alanine 214 contacts ATP. Position 214 (alanine 214) interacts with Mg(2+). CDP is bound at residue aspartate 218. Aspartate 218 lines the Mg(2+) pocket. Lysine 219 is an AMP binding site. Lysine 219 serves as a coordination point for ATP. Residue glycine 237 coordinates ADP. Glycine 237 lines the CDP pocket. Residues glycine 238 and glycine 312 each contribute to the AMP site. ATP contacts are provided by glycine 238 and glycine 312. CDP contacts are provided by glycine 337 and phenylalanine 342. Position 342 (phenylalanine 342) interacts with ADP. AMP is bound at residue glutamate 343. The ATP site is built by glutamate 343, aspartate 374, and threonine 375. Aspartate 374 contributes to the Mg(2+) binding site.

It belongs to the phosphoglycerate kinase family. In terms of assembly, monomer. It depends on Mg(2+) as a cofactor.

The protein localises to the cytoplasm. The protein resides in the mitochondrion. The catalysed reaction is (2R)-3-phosphoglycerate + ATP = (2R)-3-phospho-glyceroyl phosphate + ADP. The protein operates within carbohydrate degradation; glycolysis; pyruvate from D-glyceraldehyde 3-phosphate: step 2/5. In terms of biological role, catalyzes one of the two ATP producing reactions in the glycolytic pathway via the reversible conversion of 1,3-diphosphoglycerate to 3-phosphoglycerate. Both L- and D- forms of purine and pyrimidine nucleotides can be used as substrates, but the activity is much lower on pyrimidines. Negatively regulates the biosynthesis of acetyl-CoA from pyruvate in the mitochondrion. This Agaricus bisporus (White button mushroom) protein is Phosphoglycerate kinase (pgkA).